A 179-amino-acid polypeptide reads, in one-letter code: Signal peptidase complex catalytic subunit SEC11A (179 aa).

Topologically, residues 1 to 16 (MLSLDFLDDVRRMNKR) are cytoplasmic. The chain crosses the membrane as a helical; Signal-anchor for type II membrane protein span at residues 17-36 (QLYYQVLNFGMIVSSALMIW). Residues 37–179 (KGLMLITGSE…LGLFVLVHRE (143 aa)) lie on the Lumenal side of the membrane. Residues S56, H96, and D122 each act as charge relay system in the active site. The C-terminal short (CTS) helix stretch occupies residues 165 to 176 (AVLFLLGLFVLV).

The protein belongs to the peptidase S26B family. In terms of assembly, component of the signal peptidase complex paralog A (SPC-A) composed of a catalytic subunit SEC11A and three accessory subunits SPCS1, SPCS2 and SPCS3. Within the complex, interacts with SPCS2 and SPCS3. The complex induces a local thinning of the ER membrane which is used to measure the length of the signal peptide (SP) h-region of protein substrates. This ensures the selectivity of the complex towards h-regions shorter than 18-20 amino acids.

The protein localises to the endoplasmic reticulum membrane. The enzyme catalyses Cleavage of hydrophobic, N-terminal signal or leader sequences from secreted and periplasmic proteins.. In terms of biological role, catalytic component of the signal peptidase complex (SPC) which catalyzes the cleavage of N-terminal signal sequences from nascent proteins as they are translocated into the lumen of the endoplasmic reticulum. Specifically cleaves N-terminal signal peptides that contain a hydrophobic alpha-helix (h-region) shorter than 18-20 amino acids. This Rattus norvegicus (Rat) protein is Signal peptidase complex catalytic subunit SEC11A (Sec11a).